The chain runs to 359 residues: Glycerol-1-phosphate dehydrogenase [NAD(P)+] (359 aa).

NAD(+)-binding positions include 107 to 111 and 129 to 132; these read GRVID and TAAS. D134 lines the substrate pocket. S138 is an NAD(+) binding site. Residue D181 coordinates substrate. The Zn(2+) site is built by D181 and H261. H265 lines the substrate pocket. Residue H277 participates in Zn(2+) binding.

This sequence belongs to the glycerol-1-phosphate dehydrogenase family. It depends on Zn(2+) as a cofactor.

The protein localises to the cytoplasm. It catalyses the reaction sn-glycerol 1-phosphate + NAD(+) = dihydroxyacetone phosphate + NADH + H(+). The enzyme catalyses sn-glycerol 1-phosphate + NADP(+) = dihydroxyacetone phosphate + NADPH + H(+). It functions in the pathway membrane lipid metabolism; glycerophospholipid metabolism. Its function is as follows. Catalyzes the NAD(P)H-dependent reduction of dihydroxyacetonephosphate (DHAP or glycerone phosphate) to glycerol 1-phosphate (G1P). The G1P thus generated is used as the glycerophosphate backbone of phospholipids in the cellular membranes of Archaea. This Methanosphaerula palustris (strain ATCC BAA-1556 / DSM 19958 / E1-9c) protein is Glycerol-1-phosphate dehydrogenase [NAD(P)+].